A 347-amino-acid chain; its full sequence is NADH-ubiquinone oxidoreductase chain 2 (347 aa).

The next 10 helical transmembrane spans lie at 3 to 23 (PIVFSTILTTAIMGTVIVMMS), 25 to 45 (HWLMVWIGFEMNLLAIIPILM), 59 to 79 (YFLTQATASMLLMSAIIINLM), 111 to 131 (FHFWVPEVTQGISLMSGLILL), 149 to 169 (INLDMLMTSALLSILVGGWGG), 178 to 198 (IMAYSSIAHMGWMTAILTYNP), 201 to 221 (TMLNMLIYIMMTLTTFMLLML), 242 to 262 (SLILIIMLSLGGLPPLSGFIP), 274 to 294 (NSIILPTSMAIMALLNLYFYL), and 325 to 345 (LLPTLIIMSTLLLPLMPTMSI).

Belongs to the complex I subunit 2 family. In terms of assembly, core subunit of respiratory chain NADH dehydrogenase (Complex I) which is composed of 45 different subunits. Interacts with TMEM242.

Its subcellular location is the mitochondrion inner membrane. It catalyses the reaction a ubiquinone + NADH + 5 H(+)(in) = a ubiquinol + NAD(+) + 4 H(+)(out). Core subunit of the mitochondrial membrane respiratory chain NADH dehydrogenase (Complex I) which catalyzes electron transfer from NADH through the respiratory chain, using ubiquinone as an electron acceptor. Essential for the catalytic activity and assembly of complex I. The chain is NADH-ubiquinone oxidoreductase chain 2 from Rhinoceros unicornis (Greater Indian rhinoceros).